The sequence spans 307 residues: Malonyl-[acyl-carrier protein] O-methyltransferase (307 aa).

This sequence belongs to the methyltransferase superfamily.

The catalysed reaction is malonyl-[ACP] + S-adenosyl-L-methionine = malonyl-[ACP] methyl ester + S-adenosyl-L-homocysteine. The protein operates within cofactor biosynthesis; biotin biosynthesis. Its function is as follows. Converts the free carboxyl group of a malonyl-thioester to its methyl ester by transfer of a methyl group from S-adenosyl-L-methionine (SAM). It allows to synthesize pimeloyl-ACP via the fatty acid synthetic pathway. This Nitrosospira multiformis (strain ATCC 25196 / NCIMB 11849 / C 71) protein is Malonyl-[acyl-carrier protein] O-methyltransferase.